The sequence spans 142 residues: Hemoglobin subunit alpha (142 aa).

The Globin domain maps to 2–142 (VLSAADKTNV…LSTVLTSKYR (141 aa)). A Phosphoserine modification is found at Ser-4. An N6-succinyllysine modification is found at Lys-8. The residue at position 9 (Thr-9) is a Phosphothreonine. Lys-12 bears the N6-succinyllysine mark. Position 17 is an N6-acetyllysine; alternate (Lys-17). An N6-succinyllysine; alternate modification is found at Lys-17. Tyr-25 carries the post-translational modification Phosphotyrosine. At Ser-36 the chain carries Phosphoserine. Lys-41 bears the N6-succinyllysine mark. Phosphoserine is present on Ser-50. Residue Gln-59 coordinates O2. His-88 contacts heme b. A Phosphothreonine modification is found at Thr-109. Position 125 is a phosphoserine (Ser-125). Phosphothreonine occurs at positions 135 and 138. Ser-139 bears the Phosphoserine mark.

The protein belongs to the globin family. As to quaternary structure, heterotetramer of two alpha chains and two beta chains. Red blood cells.

Functionally, involved in oxygen transport from the lung to the various peripheral tissues. In terms of biological role, hemopressin acts as an antagonist peptide of the cannabinoid receptor CNR1. Hemopressin-binding efficiently blocks cannabinoid receptor CNR1 and subsequent signaling. This is Hemoglobin subunit alpha (HBA) from Monodelphis domestica (Gray short-tailed opossum).